Reading from the N-terminus, the 371-residue chain is N-acetyldiaminopimelate deacetylase (371 aa).

Asp68 is a catalytic residue. Glu127 functions as the Proton acceptor in the catalytic mechanism.

This sequence belongs to the peptidase M20A family. N-acetyldiaminopimelate deacetylase subfamily.

The catalysed reaction is N-acetyl-(2S,6S)-2,6-diaminopimelate + H2O = (2S,6S)-2,6-diaminopimelate + acetate. It participates in amino-acid biosynthesis; L-lysine biosynthesis via DAP pathway; LL-2,6-diaminopimelate from (S)-tetrahydrodipicolinate (acetylase route): step 3/3. In terms of biological role, catalyzes the conversion of N-acetyl-diaminopimelate to diaminopimelate and acetate. The chain is N-acetyldiaminopimelate deacetylase from Listeria monocytogenes serotype 4b (strain CLIP80459).